We begin with the raw amino-acid sequence, 248 residues long: Sugar fermentation stimulation protein homolog (248 aa).

This sequence belongs to the SfsA family.

The polypeptide is Sugar fermentation stimulation protein homolog (Prochlorococcus marinus subsp. pastoris (strain CCMP1986 / NIES-2087 / MED4)).